Reading from the N-terminus, the 150-residue chain is D-aminoacyl-tRNA deacylase (150 aa).

Positions 138 to 139 (GP) match the Gly-cisPro motif, important for rejection of L-amino acids motif.

It belongs to the DTD family. Homodimer.

Its subcellular location is the cytoplasm. It catalyses the reaction glycyl-tRNA(Ala) + H2O = tRNA(Ala) + glycine + H(+). The enzyme catalyses a D-aminoacyl-tRNA + H2O = a tRNA + a D-alpha-amino acid + H(+). Its function is as follows. An aminoacyl-tRNA editing enzyme that deacylates mischarged D-aminoacyl-tRNAs. Also deacylates mischarged glycyl-tRNA(Ala), protecting cells against glycine mischarging by AlaRS. Acts via tRNA-based rather than protein-based catalysis; rejects L-amino acids rather than detecting D-amino acids in the active site. By recycling D-aminoacyl-tRNA to D-amino acids and free tRNA molecules, this enzyme counteracts the toxicity associated with the formation of D-aminoacyl-tRNA entities in vivo and helps enforce protein L-homochirality. The polypeptide is D-aminoacyl-tRNA deacylase (Azobacteroides pseudotrichonymphae genomovar. CFP2).